We begin with the raw amino-acid sequence, 89 residues long: Phosphocarrier protein HPr (89 aa).

Positions 1–88 constitute an HPr domain; it reads MLKQSIEIIN…DLINGYFGEG (88 aa). The active-site Pros-phosphohistidine intermediate is the histidine 15. Serine 46 is modified (phosphoserine; by HPrK/P).

It belongs to the HPr family.

It localises to the cytoplasm. Its activity is regulated as follows. Phosphorylation on Ser-46 inhibits the phosphoryl transfer from enzyme I to HPr. Its function is as follows. General (non sugar-specific) component of the phosphoenolpyruvate-dependent sugar phosphotransferase system (sugar PTS). This major carbohydrate active-transport system catalyzes the phosphorylation of incoming sugar substrates concomitantly with their translocation across the cell membrane. The phosphoryl group from phosphoenolpyruvate (PEP) is transferred to the phosphoryl carrier protein HPr by enzyme I. Phospho-HPr then transfers it to the PTS EIIA domain. This is Phosphocarrier protein HPr (ptsH) from Neisseria meningitidis serogroup A / serotype 4A (strain DSM 15465 / Z2491).